A 311-amino-acid chain; its full sequence is 4-diphosphocytidyl-2-C-methyl-D-erythritol kinase (311 aa).

K16 is a catalytic residue. 100-110 (PIGAGLAGGSS) serves as a coordination point for ATP. D142 is a catalytic residue.

Belongs to the GHMP kinase family. IspE subfamily.

The enzyme catalyses 4-CDP-2-C-methyl-D-erythritol + ATP = 4-CDP-2-C-methyl-D-erythritol 2-phosphate + ADP + H(+). It participates in isoprenoid biosynthesis; isopentenyl diphosphate biosynthesis via DXP pathway; isopentenyl diphosphate from 1-deoxy-D-xylulose 5-phosphate: step 3/6. Catalyzes the phosphorylation of the position 2 hydroxy group of 4-diphosphocytidyl-2C-methyl-D-erythritol. The chain is 4-diphosphocytidyl-2-C-methyl-D-erythritol kinase from Prochlorococcus marinus (strain AS9601).